A 186-amino-acid chain; its full sequence is Dynactin subunit 3 (186 aa).

Alanine 2 is subject to N-acetylalanine. A coiled-coil region spans residues 135 to 157 (QQQDQCVEITEESKALLEEYNKT).

The protein belongs to the dynactin subunit 3 family. As to quaternary structure, subunit of dynactin, a multiprotein complex part of a tripartite complex with dynein and a adapter, such as BICDL1, BICD2 or HOOK3. The dynactin complex is built around ACTR1A/ACTB filament and consists of an actin-related filament composed of a shoulder domain, a pointed end and a barbed end. Its length is defined by its flexible shoulder domain. The soulder is composed of 2 DCTN1 subunits, 4 DCTN2 and 2 DCTN3. The 4 DCNT2 (via N-terminus) bind the ACTR1A filament and act as molecular rulers to determine the length. The pointed end is important for binding dynein-dynactin cargo adapters. Consists of 4 subunits: ACTR10, DCNT4, DCTN5 and DCTN6. The barbed end is composed of a CAPZA1:CAPZB heterodimers, which binds ACTR1A/ACTB filament and dynactin and stabilizes dynactin. In terms of tissue distribution, ubiquitously expressed. Highly expressed in muscle and pancreas and detected at lower levels in brain.

The protein resides in the cytoplasm. It localises to the cytoskeleton. The protein localises to the microtubule organizing center. It is found in the centrosome. Its subcellular location is the chromosome. The protein resides in the centromere. It localises to the kinetochore. The protein localises to the spindle. It is found in the cleavage furrow. Its subcellular location is the midbody. Its function is as follows. Part of the dynactin complex that activates the molecular motor dynein for ultra-processive transport along microtubules. Together with dynein may be involved in spindle assembly and cytokinesis. This chain is Dynactin subunit 3, found in Homo sapiens (Human).